We begin with the raw amino-acid sequence, 92 residues long: Large ribosomal subunit protein bL27 (92 aa).

The propeptide occupies 1–10 (MLLQLQIQLF).

It belongs to the bacterial ribosomal protein bL27 family. The N-terminus is cleaved by ribosomal processing cysteine protease Prp.

The sequence is that of Large ribosomal subunit protein bL27 from Aster yellows witches'-broom phytoplasma (strain AYWB).